The following is a 571-amino-acid chain: Vesicle-associated protein 1-4 (571 aa).

The MSP 1 domain occupies 1–126; that stretch reads MSTDELLTFD…EETIFKIIYV (126 aa). The disordered stretch occupies residues 132–154; it reads QSPVQEGLEDGSSPSASVSDKGN. Residues 143 to 153 show a composition bias toward polar residues; sequence SSPSASVSDKG. Residues 176–296 form the MSP 2 domain; sequence LLIIDPVDVQ…EETRLKVMYV (121 aa). The disordered stretch occupies residues 297–322; sequence TPPQPPSPVQEGTEEGSSPRASVSDN. Residues 311–322 are compositionally biased toward polar residues; the sequence is EGSSPRASVSDN. A TIR domain is found at 356–493; sequence PQYQVFINFR…KWKEALSSVF (138 aa). Residue Glu-430 is part of the active site.

It belongs to the VAMP-associated protein (VAP) (TC 9.B.17) family.

It carries out the reaction NAD(+) + H2O = ADP-D-ribose + nicotinamide + H(+). Functionally, may play a role in vesicle trafficking. The sequence is that of Vesicle-associated protein 1-4 (PVA14) from Arabidopsis thaliana (Mouse-ear cress).